The chain runs to 599 residues: Leishmanolysin (599 aa).

The signal sequence occupies residues 1–39 (MSVDSSSTHRHRSVAARLVRLAAAGAAVIAAVGTAAAWA). Residues 40–97 (HAGAVQHRCIHDAMQARVRQSVARHHTAPGAVSAVGLPYVTLDTAAAADRRPGSAPTV) constitute a propeptide, activation peptide. 2 disulfide bridges follow: C122–C139 and C188–C227. H261 lines the Zn(2+) pocket. E262 is an active-site residue. Residue H265 participates in Zn(2+) binding. The N-linked (GlcNAc...) asparagine glycan is linked to N297. 7 cysteine pairs are disulfide-bonded: C311–C383, C390–C452, C403–C422, C412–C486, C463–C507, C512–C562, and C532–C555. Position 331 (H331) interacts with Zn(2+). N394 carries an N-linked (GlcNAc...) asparagine glycan. N574 carries GPI-anchor amidated asparagine lipidation. The propeptide at 575–599 (AAAGRRGPRAAATALLVAALLAVAL) is removed in mature form.

It belongs to the peptidase M8 family. Requires Zn(2+) as cofactor.

It is found in the cell membrane. The catalysed reaction is Preference for hydrophobic residues at P1 and P1' and basic residues at P2' and P3'. A model nonapeptide is cleaved at -Ala-Tyr-|-Leu-Lys-Lys-.. Has an integral role during the infection of macrophages in the mammalian host. This is Leishmanolysin (gp63) from Leishmania chagasi.